The primary structure comprises 343 residues: Phenylalanine--tRNA ligase alpha subunit (343 aa).

Glu256 contacts Mg(2+).

Belongs to the class-II aminoacyl-tRNA synthetase family. Phe-tRNA synthetase alpha subunit type 1 subfamily. In terms of assembly, tetramer of two alpha and two beta subunits. The cofactor is Mg(2+).

The protein resides in the cytoplasm. The catalysed reaction is tRNA(Phe) + L-phenylalanine + ATP = L-phenylalanyl-tRNA(Phe) + AMP + diphosphate + H(+). This chain is Phenylalanine--tRNA ligase alpha subunit, found in Phytoplasma australiense.